A 345-amino-acid chain; its full sequence is Uroporphyrinogen decarboxylase (345 aa).

Residues 27 to 31 (RQAGR), Phe-46, Asp-76, Tyr-152, Ser-207, and His-320 each bind substrate.

The protein belongs to the uroporphyrinogen decarboxylase family. Homodimer.

The protein resides in the cytoplasm. It carries out the reaction uroporphyrinogen III + 4 H(+) = coproporphyrinogen III + 4 CO2. It functions in the pathway porphyrin-containing compound metabolism; protoporphyrin-IX biosynthesis; coproporphyrinogen-III from 5-aminolevulinate: step 4/4. In terms of biological role, catalyzes the decarboxylation of four acetate groups of uroporphyrinogen-III to yield coproporphyrinogen-III. The protein is Uroporphyrinogen decarboxylase of Geobacillus kaustophilus (strain HTA426).